The following is a 1149-amino-acid chain: ATP-dependent helicase/deoxyribonuclease subunit B (1149 aa).

8 to 15 (GRAGTGKT) serves as a coordination point for ATP. [4Fe-4S] cluster-binding residues include Cys784, Cys1102, Cys1105, and Cys1111.

It belongs to the helicase family. AddB/RexB type 1 subfamily. Heterodimer of AddA and AddB. Mg(2+) serves as cofactor. The cofactor is [4Fe-4S] cluster.

The heterodimer acts as both an ATP-dependent DNA helicase and an ATP-dependent, dual-direction single-stranded exonuclease. Recognizes the chi site generating a DNA molecule suitable for the initiation of homologous recombination. The AddB subunit has 5' -&gt; 3' nuclease activity but not helicase activity. The polypeptide is ATP-dependent helicase/deoxyribonuclease subunit B (Thermoanaerobacter pseudethanolicus (strain ATCC 33223 / 39E) (Clostridium thermohydrosulfuricum)).